Here is a 322-residue protein sequence, read N- to C-terminus: CMP-sialic acid transporter 1 (322 aa).

The Cytoplasmic portion of the chain corresponds to 1–2 (MQ). Residues 3-23 (WYLVAALLTVLTSSQGILTTL) form a helical membrane-spanning segment. The Lumenal portion of the chain corresponds to 24–33 (SQSNGKYKYD). A helical transmembrane segment spans residues 34 to 54 (YATIPFLAELFKLSFSSFFLW). Residues 55–75 (KECQSSSPPRMTKEWRSIRLY) lie on the Cytoplasmic side of the membrane. The chain crosses the membrane as a helical span at residues 76–96 (LVPSVIYLIHNNVQFATLTYV). Residues 97 to 100 (DPST) lie on the Lumenal side of the membrane. Residues 101 to 120 (YQIMGNLKIVTTGILFRLVL) form a helical membrane-spanning segment. Topologically, residues 121 to 126 (KRKLSN) are cytoplasmic. The helical transmembrane segment at 127–144 (LQWMAVVLLAVGTTTSQV) threads the bilayer. At 145 to 157 (KGCGDAPCDSLFS) the chain is on the lumenal side. Residues 158–178 (APFQGYMLGILSACLSALAGV) traverse the membrane as a helical segment. Residues 179 to 198 (YTEYLMKKNNDSLYWQNVQL) lie on the Cytoplasmic side of the membrane. The helical transmembrane segment at 199-219 (YTFGVIFNMGWLIYGDFKAGF) threads the bilayer. Residues 220–233 (ERGPWWQRLFNGYS) lie on the Lumenal side of the membrane. Residues 234–254 (ITTWMVVFNLGSTGLLVSWLM) traverse the membrane as a helical segment. Topologically, residues 255 to 262 (KYSDNIVK) are cytoplasmic. Residues 263–283 (VYSTSMAMLLTMVLSVYLFNV) form a helical membrane-spanning segment. The Lumenal portion of the chain corresponds to 284-286 (RAT).

The protein belongs to the nucleotide-sugar transporter family. CMP-Sialate:CMP antiporter (TC 2.A.7.12) subfamily. In terms of tissue distribution, expressed in roots, leaves and stalks.

It localises to the golgi apparatus membrane. Functionally, sugar transporter involved in the transport of CMP-sialic acid from the cytoplasm into the Golgi. May transport important nucleotide sugars such as CMP-Kdo (2-keto-3-deoxy-D-manno-octulosonic acid) in physiological conditions. The chain is CMP-sialic acid transporter 1 from Oryza sativa subsp. japonica (Rice).